A 190-amino-acid chain; its full sequence is Holliday junction branch migration complex subunit RuvA (190 aa).

The segment at 1-64 (MIGKLSGTLD…EDAQILYGFA (64 aa)) is domain I. The domain II stretch occupies residues 65–137 (TSQERAAFRE…LKGKLGPDIG (73 aa)). Residues 137 to 141 (GVAAS) are flexible linker. The tract at residues 142–190 (VANDSQADILQALLALGYSDKEAAAALKALPSDVGVSEGIRLALRALGK) is domain III.

Belongs to the RuvA family. As to quaternary structure, homotetramer. Forms an RuvA(8)-RuvB(12)-Holliday junction (HJ) complex. HJ DNA is sandwiched between 2 RuvA tetramers; dsDNA enters through RuvA and exits via RuvB. An RuvB hexamer assembles on each DNA strand where it exits the tetramer. Each RuvB hexamer is contacted by two RuvA subunits (via domain III) on 2 adjacent RuvB subunits; this complex drives branch migration. In the full resolvosome a probable DNA-RuvA(4)-RuvB(12)-RuvC(2) complex forms which resolves the HJ.

It is found in the cytoplasm. The RuvA-RuvB-RuvC complex processes Holliday junction (HJ) DNA during genetic recombination and DNA repair, while the RuvA-RuvB complex plays an important role in the rescue of blocked DNA replication forks via replication fork reversal (RFR). RuvA specifically binds to HJ cruciform DNA, conferring on it an open structure. The RuvB hexamer acts as an ATP-dependent pump, pulling dsDNA into and through the RuvAB complex. HJ branch migration allows RuvC to scan DNA until it finds its consensus sequence, where it cleaves and resolves the cruciform DNA. The protein is Holliday junction branch migration complex subunit RuvA of Albidiferax ferrireducens (strain ATCC BAA-621 / DSM 15236 / T118) (Rhodoferax ferrireducens).